The primary structure comprises 334 residues: Thioredoxin reductase (334 aa).

Residues 11–14 (SGAG), 40–41 (TA), Gln-45, Asn-54, Cys-148, Asp-294, and 301–303 (RQA) contribute to the FAD site. Cys-145 and Cys-148 are oxidised to a cystine.

Belongs to the class-II pyridine nucleotide-disulfide oxidoreductase family. In terms of assembly, homodimer. It depends on FAD as a cofactor.

It carries out the reaction [thioredoxin]-dithiol + NADP(+) = [thioredoxin]-disulfide + NADPH + H(+). Functionally, component of the thioredoxin-thioredoxin reductase system which may be involved in biosynthesis of penicillins and cephalosporins and may be important in determining the thiol-disulfide redox balance. The chain is Thioredoxin reductase (TRR1) from Penicillium chrysogenum (Penicillium notatum).